The following is a 235-amino-acid chain: uncharacterized protein (235 aa).

2 disordered regions span residues 20–64 (IHPN…LPIK) and 140–164 (SQFF…NFDQ). Low complexity-rich tracts occupy residues 30–60 (NNNN…SNNN) and 140–161 (SQFF…NNKN). Residues 174–213 (KYMEFLSDIEQLNSDLKESKDNLESISIEMVLLETRLKGL) adopt a coiled-coil conformation.

This is an uncharacterized protein from Dictyostelium discoideum (Social amoeba).